The primary structure comprises 332 residues: DNA-directed RNA polymerase subunit alpha (332 aa).

Residues Met1–Thr234 are alpha N-terminal domain (alpha-NTD). Residues Val248–Gly332 are alpha C-terminal domain (alpha-CTD).

It belongs to the RNA polymerase alpha chain family. Homodimer. The RNAP catalytic core consists of 2 alpha, 1 beta, 1 beta' and 1 omega subunit. When a sigma factor is associated with the core the holoenzyme is formed, which can initiate transcription.

It carries out the reaction RNA(n) + a ribonucleoside 5'-triphosphate = RNA(n+1) + diphosphate. Functionally, DNA-dependent RNA polymerase catalyzes the transcription of DNA into RNA using the four ribonucleoside triphosphates as substrates. This Xylella fastidiosa (strain M23) protein is DNA-directed RNA polymerase subunit alpha.